We begin with the raw amino-acid sequence, 93 residues long: Allatostatin C (93 aa).

Positions M1–A23 are cleaved as a signal peptide. A propeptide spanning residues M24–V61 is cleaved from the precursor. A disulfide bond links C83 and C90.

The protein resides in the secreted. Its function is as follows. Inhibits juvenile hormone biosynthesis. The polypeptide is Allatostatin C (Camponotus floridanus (Florida carpenter ant)).